A 302-amino-acid chain; its full sequence is 4-hydroxy-tetrahydrodipicolinate synthase (302 aa).

Threonine 56 contacts pyruvate. The Proton donor/acceptor role is filled by tyrosine 145. The Schiff-base intermediate with substrate role is filled by lysine 173. Valine 215 contacts pyruvate.

This sequence belongs to the DapA family. As to quaternary structure, homotetramer; dimer of dimers.

It localises to the cytoplasm. It carries out the reaction L-aspartate 4-semialdehyde + pyruvate = (2S,4S)-4-hydroxy-2,3,4,5-tetrahydrodipicolinate + H2O + H(+). It functions in the pathway amino-acid biosynthesis; L-lysine biosynthesis via DAP pathway; (S)-tetrahydrodipicolinate from L-aspartate: step 3/4. Catalyzes the condensation of (S)-aspartate-beta-semialdehyde [(S)-ASA] and pyruvate to 4-hydroxy-tetrahydrodipicolinate (HTPA). This is 4-hydroxy-tetrahydrodipicolinate synthase from Prochlorococcus marinus subsp. pastoris (strain CCMP1986 / NIES-2087 / MED4).